A 347-amino-acid polypeptide reads, in one-letter code: Phenylalanine--tRNA ligase alpha subunit (347 aa).

Glu261 serves as a coordination point for Mg(2+).

Belongs to the class-II aminoacyl-tRNA synthetase family. Phe-tRNA synthetase alpha subunit type 1 subfamily. Tetramer of two alpha and two beta subunits. It depends on Mg(2+) as a cofactor.

The protein resides in the cytoplasm. The catalysed reaction is tRNA(Phe) + L-phenylalanine + ATP = L-phenylalanyl-tRNA(Phe) + AMP + diphosphate + H(+). The protein is Phenylalanine--tRNA ligase alpha subunit of Streptococcus mutans serotype c (strain ATCC 700610 / UA159).